Reading from the N-terminus, the 627-residue chain is Coiled-coil domain-containing protein 22 (627 aa).

The interval 1–321 (MEEADRILIH…VADIPAASQR (321 aa)) is sufficient for interaction with COMMD1. Residues 1–447 (MEEADRILIH…LQDCRELESS (447 aa)) form a sufficicient and required for interaction with CCDC93 region. The stretch at 321-384 (RPEQDTRAAQ…SVAEQEQALR (64 aa)) forms a coiled coil. Ser410 carries the phosphoserine modification. Positions 448 to 535 (RRLVEIQELH…NSLSGKLDRT (88 aa)) form a coiled coil.

The protein belongs to the CCDC22 family. Component of the commander complex consisting of the CCC subcomplex and the retriever subcomplex. Component of the CCC (COMMD/CCDC22/CCDC93) subcomplex consisting of COMMD1, COMMD2, COMMD3, COMMD4, COMMD5, COMMD6, COMMD7, COMMD8, COMMD9, COMMD10, CCDC22 and CCDC93. Forms a coiled-coil heterodimer with CCDC22; this heterodimer interacts with the guanine nucleotide exchange factor DENND10; the interaction is direct. Interacts with CUL1, CUL2, CUL3, SKP1, BTRC. Interacts with SNX17 and SNX31. Interacts with CPNE1 and CPNE4.

The protein localises to the endosome. It localises to the cytoplasm. It is found in the cytoskeleton. The protein resides in the microtubule organizing center. Its subcellular location is the centrosome. Component of the commander complex that is essential for endosomal recycling of transmembrane cargos; the Commander complex is composed of composed of the CCC subcomplex and the retriever subcomplex. Component of the CCC complex, which is involved in the regulation of endosomal recycling of surface proteins, including integrins, signaling receptor and channels. Involved in regulation of NF-kappa-B signaling. Promotes ubiquitination of I-kappa-B-kinase subunit IKBKB and its subsequent proteasomal degradation leading to NF-kappa-B activation; the function may involve association with COMMD8 and a CUL1-dependent E3 ubiquitin ligase complex. May down-regulate NF-kappa-B activity via association with COMMD1 and involving a CUL2-dependent E3 ubiquitin ligase complex. Regulates the cellular localization of COMM domain-containing proteins, such as COMMD1 and COMMD10. Component of the CCC complex, which is involved in the regulation of endosomal recycling of surface proteins, including integrins, signaling receptor and channels. The CCC complex associates with SNX17, retriever and WASH complexes to prevent lysosomal degradation and promote cell surface recycling of numerous cargos such as integrins ITGA5:ITGB1. Plays a role in copper ion homeostasis. Involved in copper-dependent ATP7A trafficking between the trans-Golgi network and vesicles in the cell periphery; the function is proposed to depend on its association within the CCC complex and cooperation with the WASH complex on early endosomes. The chain is Coiled-coil domain-containing protein 22 from Rattus norvegicus (Rat).